We begin with the raw amino-acid sequence, 542 residues long: MAKEIIFREDARRALERGVNALAEAVKVTLGPKGRNVVIEKKFGAPTITNDGVTIAREIELEDNFENMGAQLVKEVATKTNDVAGDGTTTATVLAQALVREGLKNVAAGANPMIIKRGIEKAVEKAVEEIKAMAKPIESKEAIAQVATVSANDDSIGNLIAEAMEKVGKDGVITVEESQGIGTNLEVVEGMNFDRGYISPYMITDTDKMEAALTDPYILITDKKVSSVQELLPVLEKVVQTGNKPVLLICEDLEGEALATLVLNKLRGTLNVVAVKAPGFGDRRKAMLEDIAILTGGTVITEEVGLKLDKAELDMLGTARQIRVKKEETIIVGGAGEQAQIEGRIAQIKKQIEETTSDFDREKLQERLAKLAGGVAVIQVGAATEVEMKEKKLRIDDALNATRAAVEEGIVPGGGSAFVNIITTLDSVQLEGDAKTGVDIVKRALEEPLRQIANNAGLEGSVVVEKVRTTGKGFNAMSEEYVDMIAAGIIDPAKVTRSALQNAASIAAMVLTTETLVADKPEKDAPNPMAGMGGMGGMGGMM.

Residues Thr-29 to Pro-32, Asp-86 to Thr-90, Gly-414, and Asp-491 each bind ATP.

It belongs to the chaperonin (HSP60) family. In terms of assembly, forms a cylinder of 14 subunits composed of two heptameric rings stacked back-to-back. Interacts with the co-chaperonin GroES.

It localises to the cytoplasm. The catalysed reaction is ATP + H2O + a folded polypeptide = ADP + phosphate + an unfolded polypeptide.. Functionally, together with its co-chaperonin GroES, plays an essential role in assisting protein folding. The GroEL-GroES system forms a nano-cage that allows encapsulation of the non-native substrate proteins and provides a physical environment optimized to promote and accelerate protein folding. This is Chaperonin GroEL from Desulforamulus reducens (strain ATCC BAA-1160 / DSM 100696 / MI-1) (Desulfotomaculum reducens).